Consider the following 573-residue polypeptide: Leucine aminopeptidase, chloroplastic (573 aa).

The N-terminal 53 residues, 1-53, are a transit peptide targeting the chloroplast; it reads MATLRVSSLLASSPSSLHCNPSVFTKCQSSPRWAFSFSVTPLCSRRSKRIVHC. Residues lysine 342 and aspartate 347 each contribute to the Mn(2+) site. Lysine 354 is a catalytic residue. Aspartate 367, aspartate 427, and glutamate 429 together coordinate Mn(2+). Residue arginine 431 is part of the active site.

This sequence belongs to the peptidase M17 family. As to quaternary structure, homohexamer (dimer of homotrimers). The cofactor is Mn(2+). In terms of tissue distribution, in tubers and floral buds of untreated plants. After abscisic acid (ABA) treatment or mechanical wounding is mostly accumulated in leaves, to a lesser extent in stems, but not in roots.

It is found in the plastid. Its subcellular location is the chloroplast. The catalysed reaction is Release of an N-terminal amino acid, Xaa-|-Yaa-, in which Xaa is preferably Leu, but may be other amino acids including Pro although not Arg or Lys, and Yaa may be Pro. Amino acid amides and methyl esters are also readily hydrolyzed, but rates on arylamides are exceedingly low.. It carries out the reaction Release of N-terminal proline from a peptide.. Functionally, presumably involved in the processing and regular turnover of intracellular proteins. The polypeptide is Leucine aminopeptidase, chloroplastic (LAP) (Solanum tuberosum (Potato)).